The following is a 218-amino-acid chain: Histone H1 (218 aa).

Low complexity predominate over residues 1 to 19 (MSETAPVAAPAVSAPGAKA). Disordered regions lie at residues 1–42 (MSET…PSVT) and 89–218 (VSKG…TKKK). N-acetylserine is present on Ser2. The 74-residue stretch at 37–110 (AGPSVTELIT…GASGSFKLNK (74 aa)) folds into the H15 domain. Composition is skewed to basic residues over residues 118–133 (KATK…KPAA), 141–158 (KKPK…KAKK), 166–184 (KAAK…KKTA), and 191–218 (KAVK…TKKK).

The protein belongs to the histone H1/H5 family.

Its subcellular location is the nucleus. The protein resides in the chromosome. In terms of biological role, histones H1 are necessary for the condensation of nucleosome chains into higher-order structures. This Gallus gallus (Chicken) protein is Histone H1.